The chain runs to 86 residues: U15-lycotoxin-Ls1d (86 aa).

Residues 1 to 20 form the signal peptide; it reads MNSKIFAVLLLLGLLSCVLS. The WAP domain occupies 21–66; it reads DQYCPKSSITACKKMNIRNDCCKDDDCTGGSWCCATPCGNFCKYPT. 5 cysteine pairs are disulfide-bonded: cysteine 24-cysteine 54, cysteine 32-cysteine 58, cysteine 41-cysteine 53, cysteine 42-cysteine 80, and cysteine 47-cysteine 62.

Belongs to the venom protein 11 family. 01 (wap-1) subfamily. Contains 5 disulfide bonds. Expressed by the venom gland.

The protein resides in the secreted. Has antibacterial activity. The sequence is that of U15-lycotoxin-Ls1d from Lycosa singoriensis (Wolf spider).